The sequence spans 787 residues: Integrin beta-3 (787 aa).

A signal peptide spans 1–25 (MRAQWPGQLWAALLALGALAGVVVG). The Extracellular segment spans residues 26 to 717 (ESNICTTRGV…EEPECPKGPD (692 aa)). A PSI domain is found at 29–75 (ICTTRGVNSCQQCLAVSPVCAWCSDETLSQGSPRCNLKENLLKDNCA). Disulfide bonds link Cys-30/Cys-48, Cys-38/Cys-460, Cys-41/Cys-63, Cys-51/Cys-74, Cys-202/Cys-209, Cys-257/Cys-298, Cys-399/Cys-411, Cys-431/Cys-458, Cys-462/Cys-482, Cys-473/Cys-485, Cys-487/Cys-496, Cys-498/Cys-528, Cys-511/Cys-526, Cys-520/Cys-531, Cys-533/Cys-546, Cys-548/Cys-569, Cys-553/Cys-567, Cys-561/Cys-572, and Cys-574/Cys-583. The VWFA domain occupies 134 to 376 (DYPVDIYYLM…QLIVDAYGKI (243 aa)). Positions 146 and 148 each coordinate Mg(2+). Residues Ser-148, Asp-151, Asp-152, and Asp-183 each coordinate Ca(2+). Residues 202–209 (CYNMKNAC) form a CX3CL1-binding region. The interval 202-209 (CYNMKNAC) is involved in CX3CL1-, NRG1-, FGF1- and IGF1-binding. Ca(2+) is bound by residues Asn-240, Asp-242, Pro-244, Glu-245, and Asp-276. Glu-245 contacts Mg(2+). A CX3CL1-binding region spans residues 292–312 (LPNDGHCHIGTDNHYSASTTM). N-linked (GlcNAc...) asparagine glycans are attached at residues Asn-345 and Asn-396. I-EGF domains follow at residues 462 to 497 (CQAF…SMCE), 498 to 547 (CSEE…KYCE), 548 to 584 (CDDF…YYCN), and 585 to 624 (CTTR…DTCE). N-linked (GlcNAc...) asparagine glycosylation is present at Asn-477. N-linked (GlcNAc...) asparagine glycosylation is present at Asn-584. 9 disulfides stabilise this stretch: Cys-585-Cys-608, Cys-592-Cys-606, Cys-600-Cys-611, Cys-613-Cys-623, Cys-626-Cys-629, Cys-633-Cys-680, Cys-639-Cys-660, Cys-642-Cys-656, and Cys-688-Cys-712. Asn-679 carries an N-linked (GlcNAc...) asparagine glycan. The chain crosses the membrane as a helical span at residues 718–740 (ILVVLLSVMGAILLIGLATLLIW). Residues 741–787 (KLLITIHDRKEFAKFEEERARAKWDTANNPLYKEATSTFTNITYRGT) are Cytoplasmic-facing. Position 766 is a phosphothreonine (Thr-766). Phosphotyrosine is present on Tyr-772. The LIR signature appears at 776 to 782 (TSTFTNI). Position 778 is a phosphothreonine (Thr-778). Tyr-784 bears the Phosphotyrosine mark.

It belongs to the integrin beta chain family. Heterodimer of an alpha and a beta subunit. Beta-3 (ITGB3) associates with either alpha-IIB (ITGA2B) or alpha-V (ITGAV). Interacts with FLNB and COMP. Interacts with PDIA6 following platelet stimulation. Interacts with SYK; upon activation by ITGB3 promotes platelet adhesion. Interacts with MYO10. Interacts with DAB2. Interacts with FERMT2. Integrin ITGAV:ITGB3 interacts with FBLN5 (via N-terminus). Interacts with EMP2; regulates the levels of the heterodimer ITGA5:ITGB3 integrin expression on the plasma membrane. ITGAV:ITGB3 interacts with CCN3. ITGAV:ITGB3 and ITGA2B:ITGB3 interact with SELP (via C-type lectin domain); the interaction mediates cell-cell interaction and adhesion. ITGAV:ITGB3 interacts with AGRA2. ITGAV:ITGB3 is found in a ternary complex with CX3CR1 and CX3CL1. ITGAV:ITGB3 is found in a ternary complex with NRG1 and ERBB3. ITGAV:ITGB3 is found in a ternary complex with FGF1 and FGFR1. ITGAV:ITGB3 interacts with FGF2; it is likely that FGF2 can simultaneously bind ITGAV:ITGB3 and FGF receptors. ITGAV:ITGB3 binds to IL1B. ITGAV:ITGB3 is found in a ternary complex with IGF1 and IGF1R. ITGAV:ITGB3 interacts with IGF2. ITGAV:ITGB3 interacts with FBN1. ITGAV:ITGB3 interacts with CD9, CD81 and CD151 (via second extracellular domain). Interacts (via the allosteric site (site 2)) with CXCL12 in a CXCR4-independent manner. Interacts with MXRA8/DICAM; the interaction inhibits ITGAV:ITGB3 heterodimer formation. ITGAV:ITGB3 interacts with PTN. Forms a complex with PTPRZ1 and PTN that stimulates endothelial cell migration through ITGB3 Tyr-772 phosphorylation. ITGAV:ITGB3 interacts with SLC6A4. Interacts with SLC6A4 (via C-terminus); this interaction regulates SLC6A4 trafficking. ITGA2B:ITGB3 interacts with PPIA/CYPA; the interaction is ROS and PPIase activity-dependent and is increased in the presence of thrombin. Interacts with tensin TNS3; TNS3 also interacts with PEAK1, thus acting as an adapter molecule to bridge the association of PEAK1 with ITGB3. Interacts with TM4SF19. Post-translationally, phosphorylated on tyrosine residues in response to thrombin-induced platelet aggregation. Probably involved in outside-in signaling.

It localises to the cell membrane. It is found in the cell projection. The protein resides in the lamellipodium membrane. Its subcellular location is the cell junction. The protein localises to the focal adhesion. It localises to the postsynaptic cell membrane. It is found in the synapse. Integrin alpha-V/beta-3 (ITGAV:ITGB3) is a receptor for cytotactin, fibronectin, laminin, matrix metalloproteinase-2, osteopontin, osteomodulin, prothrombin, thrombospondin, vitronectin and von Willebrand factor. Integrin alpha-IIB/beta-3 (ITGA2B:ITGB3) is a receptor for fibronectin, fibrinogen, plasminogen, prothrombin, thrombospondin and vitronectin. Integrins alpha-IIB/beta-3 and alpha-V/beta-3 recognize the sequence R-G-D in a wide array of ligands. Integrin alpha-IIB/beta-3 recognizes the sequence H-H-L-G-G-G-A-K-Q-A-G-D-V in fibrinogen gamma chain. Following activation integrin alpha-IIB/beta-3 brings about platelet/platelet interaction through binding of soluble fibrinogen. This step leads to rapid platelet aggregation which physically plugs ruptured endothelial surfaces. Fibrinogen binding enhances SELP expression in activated platelets. ITGAV:ITGB3 binds to fractalkine (CX3CL1) and acts as its coreceptor in CX3CR1-dependent fractalkine signaling. ITGAV:ITGB3 binds to NRG1 (via EGF domain) and this binding is essential for NRG1-ERBB signaling. ITGAV:ITGB3 binds to FGF1 and this binding is essential for FGF1 signaling. ITGAV:ITGB3 binds to FGF2 and this binding is essential for FGF2 signaling. ITGAV:ITGB3 binds to IGF1 and this binding is essential for IGF1 signaling. ITGAV:ITGB3 binds to IGF2 and this binding is essential for IGF2 signaling. ITGAV:ITGB3 binds to IL1B and this binding is essential for IL1B signaling. ITGAV:ITGB3 binds to PLA2G2A via a site (site 2) which is distinct from the classical ligand-binding site (site 1) and this induces integrin conformational changes and enhanced ligand binding to site 1. ITGAV:ITGB3 acts as a receptor for fibrillin-1 (FBN1) and mediates R-G-D-dependent cell adhesion to FBN1. ITGAV:ITGB3 binds to the Lilrb4a/Gp49b receptor and enhances the Lilrb4a-mediated inhibition of mast cell activation. ITGAV:ITGB3 also suppresses marginal zone B cell antibody production through its interaction with Lilrb4a. In brain, plays a role in synaptic transmission and plasticity. Involved in the regulation of the serotonin neurotransmission, is required to localize to specific compartments within the synapse the serotonin receptor SLC6A4 and for an appropriate reuptake of serotonin. Controls excitatory synaptic strength by regulating GRIA2-containing AMPAR endocytosis, which affects AMPAR abundance and composition. ITGAV:ITGB3 act as a receptor for CD40LG. ITGAV:ITGB3 acts as a receptor for IBSP and promotes cell adhesion and migration to IBSP. In Mus musculus (Mouse), this protein is Integrin beta-3.